The chain runs to 304 residues: Uricase (304 aa).

Position 2 is an N-acetylalanine (A2). N6-acetyllysine; alternate is present on residues K10 and K23. K10 and K23 each carry N6-succinyllysine; alternate. The active-site Charge relay system is the K23. 2 positions are modified to N6-acetyllysine: K27 and K36. 2 positions are modified to phosphoserine: S39 and S63. T68 acts as the Charge relay system in catalysis. Urate-binding residues include T68 and D69. An N6-acetyllysine mark is found at K118, K122, and K164. F170 provides a ligand contact to urate. K175 and K185 each carry N6-acetyllysine. R187 lines the urate pocket. N6-acetyllysine; alternate occurs at positions 221 and 228. Residues K221 and K228 each carry the N6-succinyllysine; alternate modification. The residue at position 232 (S232) is a Phosphoserine. Positions 235, 236, and 262 each coordinate urate. The active-site Charge relay system is the H264. Residue K278 is modified to N6-acetyllysine. At Y289 the chain carries Phosphotyrosine. The Microbody targeting signal motif lies at 302 to 304 (SKL).

This sequence belongs to the uricase family.

It is found in the peroxisome. The catalysed reaction is urate + O2 + H2O = 5-hydroxyisourate + H2O2. It functions in the pathway purine metabolism; urate degradation; (S)-allantoin from urate: step 1/3. In terms of biological role, catalyzes the oxidation of uric acid to 5-hydroxyisourate, which is further processed to form (S)-allantoin. The protein is Uricase (UOX) of Canis lupus familiaris (Dog).